Reading from the N-terminus, the 384-residue chain is MESLMPWDARDTMSLRTEFVLFASQDGANIRSLCRRFGISPATGYKWLQRWAQEGAAGLQDRPRIPHHSPNRSSDDITALLRMAHDRHERWGARKIKRWLEDQGHTMPAFSTVHNLMARHGLLPGASPGIPATGRFEHDAPNRLWQMDFKGHFPFGGGRCHPLTLLDDHSRFSLCLAHCTDERRETVQQQLVSVFERYGLPDRMTMDNGSPWGDTTGTWTALELWLMRLGIRVGHSRPYHPQTQGKLERFHRSLKAEVLQGKWFADSGELQRAFDHWRTVYNLERPHEALDMAVPGSRYQPSARQYSGNTTPPEYDEGVMVRKVDISGKLSVKGVSLSAGKAFRGERVGLKEMQEDGSYEVWWYSTKVGVIDLKKKSITMGKGC.

In terms of domain architecture, Integrase catalytic spans 137–303 (EHDAPNRLWQ…VPGSRYQPSA (167 aa)).

This is an uncharacterized protein from Escherichia coli (strain K12).